A 217-amino-acid chain; its full sequence is Membrane-associated progesterone receptor component 2 (217 aa).

Residue Ser15 is glycosylated (O-linked (Xyl...) (chondroitin sulfate) serine). A helical membrane pass occupies residues 40-62 (ALLATGGEMLLNVALVALVLLGA). Ser84, Ser98, and Ser202 each carry phosphoserine. Residues 96-195 (DFSLEQLRQY…EKYDYVGRLL (100 aa)) enclose the Cytochrome b5 heme-binding domain. The disordered stretch occupies residues 196-217 (KPGEEPSEYTDEEDTKDHSKQD). The segment covering 200–209 (EPSEYTDEED) has biased composition (acidic residues). A Phosphotyrosine modification is found at Tyr204. Residue Thr205 is modified to Phosphothreonine.

This sequence belongs to the cytochrome b5 family. MAPR subfamily. Interacts with PGRMC1. Interacts with AAAS.

Its subcellular location is the membrane. The protein resides in the nucleus envelope. The protein localises to the endoplasmic reticulum. It localises to the secreted. Required for the maintenance of uterine histoarchitecture and normal female reproductive lifespan. May serve as a universal non-classical progesterone receptor in the uterus. Intracellular heme chaperone required for delivery of labile, or signaling heme, to the nucleus. Plays a role in adipocyte function and systemic glucose homeostasis. In brown fat, which has a high demand for heme, delivery of labile heme in the nucleus regulates the activity of heme-responsive transcriptional repressors such as NR1D1 and BACH1. This chain is Membrane-associated progesterone receptor component 2, found in Rattus norvegicus (Rat).